The chain runs to 82 residues: Putative membrane protein insertion efficiency factor (82 aa).

This sequence belongs to the UPF0161 family.

The protein resides in the cell inner membrane. Functionally, could be involved in insertion of integral membrane proteins into the membrane. This is Putative membrane protein insertion efficiency factor from Rickettsia felis (strain ATCC VR-1525 / URRWXCal2) (Rickettsia azadi).